Here is a 541-residue protein sequence, read N- to C-terminus: Protein wntless homolog (541 aa).

The Cytoplasmic segment spans residues 1-15; sequence MAGAIIENMSTKKLC. Residues 16-36 traverse the membrane as a helical segment; the sequence is IVGGILLVFQIVAFLVGGLIA. Topologically, residues 37–232 are lumenal; the sequence is PAPTTAVPYT…GIHQNGGFTK (196 aa). Positions 101-232 are interaction with Wnt proteins; sequence MEMSPWFQFM…GIHQNGGFTK (132 aa). A helical transmembrane segment spans residues 233 to 253; that stretch reads VWFAMKTFLTPSIFIIMVWYW. Over 254 to 268 the chain is Cytoplasmic; that stretch reads RRITMMSRPPVLLEK. Residues 269–289 form a helical membrane-spanning segment; the sequence is VIFALGISMTFINIPVEWFSI. Topologically, residues 290–303 are lumenal; the sequence is GFDWTWMLLFGDIR. Residues 304-324 traverse the membrane as a helical segment; the sequence is QGIFYAMLLSFWIIFCGEHMM. The Cytoplasmic portion of the chain corresponds to 325–331; it reads DQHERNH. Residues 332–352 form a helical membrane-spanning segment; that stretch reads IAGYWKQVGPIAVGSFCLFIF. Topologically, residues 353-380 are lumenal; that stretch reads DMCERGVQLTNPFYSIWTTDVGTELAMA. A helical membrane pass occupies residues 381-401; it reads FIIVAGICLCLYFLFLCFMVF. At 402-431 the chain is on the cytoplasmic side; that stretch reads QVFRNISGKQSSLPAMSKVRRLHYEGLIFR. The chain crosses the membrane as a helical span at residues 432–452; sequence FKFLMLITLACAAMTVIFFIV. Residues 453 to 471 lie on the Lumenal side of the membrane; sequence SQVSEGHWKWGGVTVQVSS. A helical membrane pass occupies residues 472–492; sequence AFFTGIYGMWNLYVFALMFLY. Topologically, residues 493-541 are cytoplasmic; that stretch reads APSHKNYGEDQSNGDLGVHSGEELQLTTTITHVDGPTEIYKLTRKEAQE.

Belongs to the wntless family. Interacts with WNT3A. Interacts with WNT1, WNT3 and WNT5. N-glycosylated. In terms of tissue distribution, expressed in the brain, skeletal muscle, heart muscle, lung, gut, liver, and kidney (at protein level). In the brain, expressed in the cortex, striatum, hippocampus and to a lesser extent in the cerebellum (at protein level). Expressed in kidney, lung, skin, intestine, brain, spinal cord, skeleton, eyes, excretion glands, tooth and palatal shelves. In the cerebellum, expressed in Purkinje cells.

Its subcellular location is the golgi apparatus membrane. The protein resides in the cytoplasmic vesicle membrane. The protein localises to the cell membrane. It is found in the endoplasmic reticulum membrane. It localises to the early endosome membrane. In terms of biological role, regulates Wnt proteins sorting and secretion in a feedback regulatory mechanism. This reciprocal interaction plays a key role in the regulation of expression, subcellular location, binding and organelle-specific association of Wnt proteins. Also plays an important role in establishment of the anterior-posterior body axis formation during development. The protein is Protein wntless homolog (Wls) of Mus musculus (Mouse).